A 1435-amino-acid chain; its full sequence is Putative ATP-dependent RNA helicase YLR419W (1435 aa).

Disordered regions lie at residues 1 to 57 and 226 to 251; these read MAKK…STAS and LSSH…KNSH. At Ser9 the chain carries Phosphoserine. A compositionally biased stretch (basic and acidic residues) spans 31–43; that stretch reads KGQEPEPEDDKRA. The segment covering 45 to 57 has biased composition (polar residues); it reads QQSNRAKVTSTAS. The UBA domain maps to 365-406; that stretch reads PLSTRMIVERLTEIGVSSDEALLALQQNDMNENEAAGFLTRE. Residues 430-531 form the RWD domain; that stretch reads QELESLESIY…EWLKENISKI (102 aa). The disordered stretch occupies residues 543–566; sequence DSKGAINKRNISNGKRSINNSSSR. The span at 551–566 shows a compositional bias: polar residues; it reads RNISNGKRSINNSSSR. Residues 614–782 form the Helicase ATP-binding domain; it reads IDIINKNEVV…FPGLATCHIE (169 aa). 627-634 lines the ATP pocket; sequence GETGSGKS. The DEAH box motif lies at 729–732; sequence DEVH. Ser816 is subject to Phosphoserine. Positions 845 to 1020 constitute a Helicase C-terminal domain; sequence LLCQVVEYVH…SLYLSVKAMG (176 aa).

The protein belongs to the DEAD box helicase family. DEAH subfamily.

The protein resides in the cytoplasm. It catalyses the reaction ATP + H2O = ADP + phosphate + H(+). Probable ATP-binding RNA helicase. The polypeptide is Putative ATP-dependent RNA helicase YLR419W (Saccharomyces cerevisiae (strain ATCC 204508 / S288c) (Baker's yeast)).